A 370-amino-acid polypeptide reads, in one-letter code: MSQDYYQVLGVSKTASQADIKKAYLKLAKQYHPDTTNAHDAEKKFKEINAAYDVLKDEQKRAAYDRFGHDAFQNQQARGGGNNSGFHHDINDIFGDFFSDFMGSGRRKQTSSKIRGSDLKYDLTIKLEEAFHGIEKNISFSSEVKCDACHGTGSEKGETVTTCDSCGGVGVTRIQQGFFTLEQTCHKCQGNGQIIKNPCKKCHGMGRYHKQRNLSINIPAGVENGTRIRHSGEGEAGIRGGNNGDLYVDIAIKPHDIYKIDGANLHCKLPISFVHAALGGEIEVPVIEGGKVKLTIPAGTQNGDQLRLRSKGMSKIRSTIRGDMLTHIHVEVPKNLSKRQRELLEEFKKESINEKENDSSFFNKMKSMWS.

The J domain occupies 4–68; sequence DYYQVLGVSK…QKRAAYDRFG (65 aa). The CR-type zinc-finger motif lies at 133–211; that stretch reads GIEKNISFSS…CHGMGRYHKQ (79 aa). Cys146, Cys149, Cys163, Cys166, Cys185, Cys188, Cys199, and Cys202 together coordinate Zn(2+). 4 CXXCXGXG motif repeats span residues 146-153, 163-170, 185-192, and 199-206; these read CDACHGTG, CDSCGGVG, CHKCQGNG, and CKKCHGMG.

It belongs to the DnaJ family. Homodimer. Zn(2+) serves as cofactor.

Its subcellular location is the cytoplasm. Its function is as follows. Participates actively in the response to hyperosmotic and heat shock by preventing the aggregation of stress-denatured proteins and by disaggregating proteins, also in an autonomous, DnaK-independent fashion. Unfolded proteins bind initially to DnaJ; upon interaction with the DnaJ-bound protein, DnaK hydrolyzes its bound ATP, resulting in the formation of a stable complex. GrpE releases ADP from DnaK; ATP binding to DnaK triggers the release of the substrate protein, thus completing the reaction cycle. Several rounds of ATP-dependent interactions between DnaJ, DnaK and GrpE are required for fully efficient folding. Also involved, together with DnaK and GrpE, in the DNA replication of plasmids through activation of initiation proteins. In Rickettsia typhi (strain ATCC VR-144 / Wilmington), this protein is Chaperone protein DnaJ.